The following is a 619-amino-acid chain: 1-deoxy-D-xylulose-5-phosphate synthase (619 aa).

Residues His-74 and 115–117 (GHS) contribute to the thiamine diphosphate site. Position 146 (Asp-146) interacts with Mg(2+). Thiamine diphosphate-binding positions include 147–148 (GA), Asn-175, and Tyr-285. Asn-175 is a Mg(2+) binding site. Residues 289-312 (EKSPSKYHAVPPRANEKEKPSKPC) are disordered. Over residues 302-312 (ANEKEKPSKPC) the composition is skewed to basic and acidic residues. Thiamine diphosphate is bound at residue Glu-365.

It belongs to the transketolase family. DXPS subfamily. Homodimer. Requires Mg(2+) as cofactor. It depends on thiamine diphosphate as a cofactor.

The enzyme catalyses D-glyceraldehyde 3-phosphate + pyruvate + H(+) = 1-deoxy-D-xylulose 5-phosphate + CO2. Its pathway is metabolic intermediate biosynthesis; 1-deoxy-D-xylulose 5-phosphate biosynthesis; 1-deoxy-D-xylulose 5-phosphate from D-glyceraldehyde 3-phosphate and pyruvate: step 1/1. Functionally, catalyzes the acyloin condensation reaction between C atoms 2 and 3 of pyruvate and glyceraldehyde 3-phosphate to yield 1-deoxy-D-xylulose-5-phosphate (DXP). The sequence is that of 1-deoxy-D-xylulose-5-phosphate synthase from Clostridium botulinum (strain Eklund 17B / Type B).